A 494-amino-acid polypeptide reads, in one-letter code: MKTIAFDSNKYLNLQRDHILERISQFDGKLYMEFGGKMLEDYHAARVLPGYEPDNKIKLLKELKEQVEIVIAINANNIEHSKARGDLGISYDQEVFRLIDKFNTLDIYVGSVVITQYNNQPAADAFRKQLEKNGIASYLHYPIKGYPTDINHIISSEGMGKNDYIKTSRNLIVVTAPGPGSGKLATCMSQMYHDQINGVKSGYAKFETFPVWNLPLHHPVNLAYEAATADLDDVNMIDPFHLETYGKTAVNYNRDIEVFPVLNRTFERILSKSPYASPTDMGVNMVGFSIVNEEAAIEASKQEIIRRYYQTLVDFKAERVTESAVKKIELLMNDIGVTPDDRHVTVAAHQKAEQTGQPALALQLPNGQIVTGKTSELFGPTAAVIINAIKTLAKIDKTTHLIEPEYVKPIQGLKVNHLGSHNPRLHSNEILIALAITAMTSEEANLAMKELGNLKGSEAHSTVILTEEDKNVLRKLGVNITFDPVYQHHKLYRK.

Belongs to the UPF0371 family.

This chain is UPF0371 protein spyM18_1356, found in Streptococcus pyogenes serotype M18 (strain MGAS8232).